Reading from the N-terminus, the 289-residue chain is HTH-type transcriptional regulator CatR (289 aa).

The HTH lysR-type domain maps to 1–57 (MELRHLRYFKVLAETLNFTRAAELLHIAQPPLSRQISQLEDQLGTLLVVRERPLRLT). Residues 18 to 37 (FTRAAELLHIAQPPLSRQIS) constitute a DNA-binding region (H-T-H motif).

Belongs to the LysR transcriptional regulatory family.

The protein resides in the cytoplasm. Its function is as follows. Positive regulator of the catBC operon that degrades catechol to acetyl-CoA. CatR binds in trans to the catR-catBC promoter-control region in the presence or absence of inducer but only activates the catBC operon in the presence of the inducer, cis-cis-muconate. This is HTH-type transcriptional regulator CatR (catR) from Pseudomonas putida (Arthrobacter siderocapsulatus).